A 564-amino-acid polypeptide reads, in one-letter code: Interactor of constitutive active ROPs 3 (564 aa).

Disordered regions lie at residues 1–73 and 88–135; these read MQTQ…SRIT and KAKD…SALE. Polar residues predominate over residues 33–44; that stretch reads ESSSSPISATNR. Basic and acidic residues-rich tracts occupy residues 63–73 and 98–123; these read VSEKKRPSRIT and TSKKQAEQEAEESRKQLQEVSSKLEE. Coiled coils occupy residues 70–133 and 231–514; these read SRIT…ETSA and AETE…AATA. Phosphoserine is present on Ser533.

The protein belongs to the ICR family. Interacts with ARAC11 in vitro. As to expression, expressed in flowers.

Its function is as follows. Acts as a scaffold, mediating interaction of ROPs with different proteins. The sequence is that of Interactor of constitutive active ROPs 3 (ICR3) from Arabidopsis thaliana (Mouse-ear cress).